The primary structure comprises 544 residues: Chitin-inducible gibberellin-responsive protein 2 (544 aa).

Residues 1–123 (MADTPTSRMI…VGASCVTEDP (123 aa)) are disordered. 3 stretches are compositionally biased toward polar residues: residues 15–30 (NIPS…SDNP), 63–74 (SQATPNKYTLDS), and 86–101 (PSSQ…PLSQ). Positions 165 to 544 (RMMGIPRGNL…RPLVVSSAWH (380 aa)) constitute a GRAS domain. Residues 172-232 (GNLKELLIAC…VARLASSGIS (61 aa)) are leucine repeat I (LRI). A VHIID region spans residues 251–316 (MHFLYEACPY…GGPPTVRITG (66 aa)). The VHIID signature appears at 282 to 286 (IHIID). Positions 332 to 364 (LVGRRLSHIASLCKVPFEFHPLAISGSKVEAAH) are leucine repeat II (LRII). The segment at 373–467 (LAVNFTLELH…QHCLAREIVN (95 aa)) is PFYRE. The SAW stretch occupies residues 470-544 (ACEGEERAER…RPLVVSSAWH (75 aa)).

The protein belongs to the GRAS family.

It is found in the nucleus. May play a regulatory role in the early step of oligosaccharide elicitor response, downstream of the membrane-associated high-affinity chitin-binding protein. The chain is Chitin-inducible gibberellin-responsive protein 2 (CIGR2) from Oryza sativa subsp. japonica (Rice).